The sequence spans 444 residues: Adenylosuccinate lyase (444 aa).

N(6)-(1,2-dicarboxyethyl)-AMP contacts are provided by residues 9-10, 73-75, and 97-98; these read RY, KHD, and TS. The Proton donor/acceptor role is filled by His-145. Gln-219 is a N(6)-(1,2-dicarboxyethyl)-AMP binding site. Ser-269 (proton donor/acceptor) is an active-site residue. Residues Ser-270, 275–277, Asn-283, and 314–318 contribute to the N(6)-(1,2-dicarboxyethyl)-AMP site; these read KRN and SAERI.

It belongs to the lyase 1 family. Adenylosuccinate lyase subfamily. In terms of assembly, homotetramer. Residues from neighboring subunits contribute catalytic and substrate-binding residues to each active site.

It catalyses the reaction N(6)-(1,2-dicarboxyethyl)-AMP = fumarate + AMP. The catalysed reaction is (2S)-2-[5-amino-1-(5-phospho-beta-D-ribosyl)imidazole-4-carboxamido]succinate = 5-amino-1-(5-phospho-beta-D-ribosyl)imidazole-4-carboxamide + fumarate. Its pathway is purine metabolism; AMP biosynthesis via de novo pathway; AMP from IMP: step 2/2. The protein operates within purine metabolism; IMP biosynthesis via de novo pathway; 5-amino-1-(5-phospho-D-ribosyl)imidazole-4-carboxamide from 5-amino-1-(5-phospho-D-ribosyl)imidazole-4-carboxylate: step 2/2. Catalyzes two reactions in de novo purine nucleotide biosynthesis. Catalyzes the breakdown of 5-aminoimidazole- (N-succinylocarboxamide) ribotide (SAICAR or 2-[5-amino-1-(5-phospho-beta-D-ribosyl)imidazole-4-carboxamido]succinate) to 5-aminoimidazole-4-carboxamide ribotide (AICAR or 5-amino-1-(5-phospho-beta-D-ribosyl)imidazole-4-carboxamide) and fumarate, and of adenylosuccinate (ADS or N(6)-(1,2-dicarboxyethyl)-AMP) to adenosine monophosphate (AMP) and fumarate. The polypeptide is Adenylosuccinate lyase (purB) (Archaeoglobus fulgidus (strain ATCC 49558 / DSM 4304 / JCM 9628 / NBRC 100126 / VC-16)).